Here is a 413-residue protein sequence, read N- to C-terminus: Eukaryotic initiation factor 4A-7 (413 aa).

The Q motif motif lies at 40–68 (DSFDAMGLQENLLRGIYAYGFEKPSAIQQ). The Helicase ATP-binding domain maps to 71–241 (IVPFCKGLDV…RKFMNKPVRI (171 aa)). Residue 84–91 (AQSGTGKT) coordinates ATP. The DEAD box motif lies at 189–192 (DEAD). Residues 252-413 (GIKQFYVNVD…ELPANVADLL (162 aa)) form the Helicase C-terminal domain.

The protein belongs to the DEAD box helicase family. eIF4A subfamily. In terms of assembly, eIF4F is a multi-subunit complex, the composition of which varies with external and internal environmental conditions. It is composed of at least EIF4A, EIF4E and EIF4G.

It carries out the reaction ATP + H2O = ADP + phosphate + H(+). Its function is as follows. ATP-dependent RNA helicase which is a subunit of the eIF4F complex involved in cap recognition and is required for mRNA binding to ribosome. In the current model of translation initiation, eIF4A unwinds RNA secondary structures in the 5'-UTR of mRNAs which is necessary to allow efficient binding of the small ribosomal subunit, and subsequent scanning for the initiator codon. This Nicotiana tabacum (Common tobacco) protein is Eukaryotic initiation factor 4A-7.